Here is a 527-residue protein sequence, read N- to C-terminus: Baicalin-beta-D-glucuronidase (527 aa).

A signal peptide spans 1–25 (MGFQVWQKGLCVLCFSLIFICGVIG). Residue E212 is the Proton donor of the active site. The Nucleophile role is filled by E329.

The protein belongs to the glycosyl hydrolase 79 family. As to quaternary structure, homotetramer.

The catalysed reaction is baicalin + H2O = baicalein + D-glucuronate + H(+). In terms of biological role, beta-glucuronidase involved in the initiation of H(2)O(2) metabolism via the production of baicalein. Unable to use glycyrrhizin, gypsogenin-3-O-D-glucuronide, luteolin-7-O-D-glucoside and apigenin-7-O-D-glucoside as substrates. This is Baicalin-beta-D-glucuronidase (SGUS) from Scutellaria baicalensis (Baical skullcap).